Reading from the N-terminus, the 450-residue chain is Pancreatic triacylglycerol lipase (450 aa).

Intrachain disulfides connect Cys-4/Cys-10, Cys-91/Cys-102, and Cys-91/Cys-104. Residue Ser-153 is the Nucleophile of the active site. Asn-167 carries N-linked (GlcNAc...) asparagine glycosylation. Catalysis depends on Asp-177, which acts as the Charge relay system. 4 residues coordinate Ca(2+): Glu-188, Arg-191, Asp-193, and Asp-196. Cys-238 and Cys-262 are joined by a disulfide. The active-site Charge relay system is the His-264. 3 cysteine pairs are disulfide-bonded: Cys-286–Cys-297, Cys-300–Cys-305, and Cys-434–Cys-450. Residues 339 to 450 form the PLAT domain; the sequence is WRYKVSVTLS…EEVLLTLNPC (112 aa).

Belongs to the AB hydrolase superfamily. Lipase family. Forms a 1:1 stoichiometric complex with (pro)colipase/CLPS.

It localises to the secreted. It carries out the reaction a triacylglycerol + H2O = a diacylglycerol + a fatty acid + H(+). It catalyses the reaction 1,2,3-tributanoylglycerol + H2O = dibutanoylglycerol + butanoate + H(+). The enzyme catalyses 1,2,3-tri-(9Z-octadecenoyl)-glycerol + H2O = di-(9Z)-octadecenoylglycerol + (9Z)-octadecenoate + H(+). The catalysed reaction is all-trans-retinyl hexadecanoate + H2O = all-trans-retinol + hexadecanoate + H(+). It carries out the reaction 1,2-di-(9Z-octadecenoyl)-glycerol + H2O = (9Z-octadecenoyl)-glycerol + (9Z)-octadecenoate + H(+). Its activity is regulated as follows. Inhibited by bile salts, is reactivated by (pro)colipase/CLPS. In terms of biological role, plays an important role in fat metabolism. It preferentially splits the esters of long-chain fatty acids at positions 1 and 3, producing mainly 2-monoacylglycerol and free fatty acids, and shows considerably higher activity against insoluble emulsified substrates than against soluble ones. The polypeptide is Pancreatic triacylglycerol lipase (PNLIP) (Sus scrofa (Pig)).